A 447-amino-acid polypeptide reads, in one-letter code: MAEDIKSKVIQAKKASIELSSVSTEVKNLALEAMAQALDKERKAILDANAKDLEAAAELKKKGKLTQALVDRLKVSDSKIDGMIAGIRDVIKLKDPVGDTLSTLELDKDLILYQVSCPIGLIGVIFESRPDVVPQVMSLCLKSGNATIFKGGSEARESNRTIFQILVKAIESTDGMPAGAFQLMETREEIMDLLSLDAYVDLLIPRGSNEFVKFIQENTKISVLGHTSGICHIYVDEYVDLDTAWKVCFDAKVQYPAVCNAIETLLINRKIADTFLPKMAEMYLSAGVELRCDEDSYALLEKRGLSPLSRATEEDWSLEYNDLILSIKLVDTIKEAIDHINTFGSHHTDGIITEDASRRKAFTALVDSSSVMVNASTRFADGYRYGKGAEVGISTNKIHSRGPVGMEGLLIYKYILLGKGQVVADYAGENAKPYTHRKLDLKFEDVN.

The protein belongs to the gamma-glutamyl phosphate reductase family.

Its subcellular location is the cytoplasm. It carries out the reaction L-glutamate 5-semialdehyde + phosphate + NADP(+) = L-glutamyl 5-phosphate + NADPH + H(+). Its pathway is amino-acid biosynthesis; L-proline biosynthesis; L-glutamate 5-semialdehyde from L-glutamate: step 2/2. Catalyzes the NADPH-dependent reduction of L-glutamate 5-phosphate into L-glutamate 5-semialdehyde and phosphate. The product spontaneously undergoes cyclization to form 1-pyrroline-5-carboxylate. This Methanosarcina barkeri (strain Fusaro / DSM 804) protein is Gamma-glutamyl phosphate reductase.